Here is a 347-residue protein sequence, read N- to C-terminus: UPF0284 protein LS215_0030 (347 aa).

It belongs to the UPF0284 family.

The protein is UPF0284 protein LS215_0030 of Saccharolobus islandicus (strain L.S.2.15 / Lassen #1) (Sulfolobus islandicus).